Consider the following 396-residue polypeptide: Methionine import ATP-binding protein MetN 2 (396 aa).

The region spanning 41 to 280 is the ABC transporter domain; sequence VSFELVGKVF…PRHGATRALL (240 aa). 77 to 84 contacts ATP; sequence GRSGAGKS.

This sequence belongs to the ABC transporter superfamily. Methionine importer (TC 3.A.1.24) family. In terms of assembly, the complex is composed of two ATP-binding proteins (MetN), two transmembrane proteins (MetI) and a solute-binding protein (MetQ).

It is found in the cell inner membrane. The enzyme catalyses L-methionine(out) + ATP + H2O = L-methionine(in) + ADP + phosphate + H(+). It carries out the reaction D-methionine(out) + ATP + H2O = D-methionine(in) + ADP + phosphate + H(+). Functionally, part of the ABC transporter complex MetNIQ involved in methionine import. Responsible for energy coupling to the transport system. The sequence is that of Methionine import ATP-binding protein MetN 2 from Burkholderia mallei (strain ATCC 23344).